The primary structure comprises 440 residues: Light-independent protochlorophyllide reductase subunit B (440 aa).

Residue Asp36 coordinates [4Fe-4S] cluster. 427 to 428 (KD) lines the substrate pocket.

It belongs to the ChlB/BchB/BchZ family. In terms of assembly, protochlorophyllide reductase is composed of three subunits; ChlL, ChlN and ChlB. Forms a heterotetramer of two ChlB and two ChlN subunits. The cofactor is [4Fe-4S] cluster.

It localises to the plastid. Its subcellular location is the cyanelle. It catalyses the reaction chlorophyllide a + oxidized 2[4Fe-4S]-[ferredoxin] + 2 ADP + 2 phosphate = protochlorophyllide a + reduced 2[4Fe-4S]-[ferredoxin] + 2 ATP + 2 H2O. The protein operates within porphyrin-containing compound metabolism; chlorophyll biosynthesis (light-independent). In terms of biological role, component of the dark-operative protochlorophyllide reductase (DPOR) that uses Mg-ATP and reduced ferredoxin to reduce ring D of protochlorophyllide (Pchlide) to form chlorophyllide a (Chlide). This reaction is light-independent. The NB-protein (ChlN-ChlB) is the catalytic component of the complex. The polypeptide is Light-independent protochlorophyllide reductase subunit B (Cyanophora paradoxa).